The chain runs to 72 residues: Protein SlyX (72 aa).

The interval 53–72 (KSSQSSMLARPEDETPPPHY) is disordered.

The protein belongs to the SlyX family.

In Proteus mirabilis (strain HI4320), this protein is Protein SlyX.